The following is a 438-amino-acid chain: UDP-N-acetylmuramoylalanine--D-glutamate ligase (438 aa).

Residue 112–118 participates in ATP binding; the sequence is GSNGKST.

Belongs to the MurCDEF family.

Its subcellular location is the cytoplasm. It catalyses the reaction UDP-N-acetyl-alpha-D-muramoyl-L-alanine + D-glutamate + ATP = UDP-N-acetyl-alpha-D-muramoyl-L-alanyl-D-glutamate + ADP + phosphate + H(+). It functions in the pathway cell wall biogenesis; peptidoglycan biosynthesis. Its function is as follows. Cell wall formation. Catalyzes the addition of glutamate to the nucleotide precursor UDP-N-acetylmuramoyl-L-alanine (UMA). The protein is UDP-N-acetylmuramoylalanine--D-glutamate ligase of Salmonella typhi.